The sequence spans 372 residues: Glutamate 5-kinase (372 aa).

K14 contributes to the ATP binding site. Substrate contacts are provided by S54, D141, and N153. ATP-binding positions include 173–174 (TD) and 215–221 (TGGMATK). Residues 280 to 358 (RGQVVLDTGA…DNIEEILGYD (79 aa)) enclose the PUA domain.

Belongs to the glutamate 5-kinase family.

It localises to the cytoplasm. The enzyme catalyses L-glutamate + ATP = L-glutamyl 5-phosphate + ADP. It functions in the pathway amino-acid biosynthesis; L-proline biosynthesis; L-glutamate 5-semialdehyde from L-glutamate: step 1/2. Catalyzes the transfer of a phosphate group to glutamate to form L-glutamate 5-phosphate. In Shewanella halifaxensis (strain HAW-EB4), this protein is Glutamate 5-kinase.